We begin with the raw amino-acid sequence, 256 residues long: Thiazole synthase (256 aa).

The active-site Schiff-base intermediate with DXP is Lys-95. 1-deoxy-D-xylulose 5-phosphate contacts are provided by residues Gly-156, 182–183 (AG), and 204–205 (NT).

Belongs to the ThiG family. As to quaternary structure, homotetramer. Forms heterodimers with either ThiH or ThiS.

The protein resides in the cytoplasm. It catalyses the reaction [ThiS sulfur-carrier protein]-C-terminal-Gly-aminoethanethioate + 2-iminoacetate + 1-deoxy-D-xylulose 5-phosphate = [ThiS sulfur-carrier protein]-C-terminal Gly-Gly + 2-[(2R,5Z)-2-carboxy-4-methylthiazol-5(2H)-ylidene]ethyl phosphate + 2 H2O + H(+). The protein operates within cofactor biosynthesis; thiamine diphosphate biosynthesis. Its function is as follows. Catalyzes the rearrangement of 1-deoxy-D-xylulose 5-phosphate (DXP) to produce the thiazole phosphate moiety of thiamine. Sulfur is provided by the thiocarboxylate moiety of the carrier protein ThiS. In vitro, sulfur can be provided by H(2)S. The sequence is that of Thiazole synthase from Escherichia coli O17:K52:H18 (strain UMN026 / ExPEC).